Consider the following 269-residue polypeptide: 4-hydroxy-tetrahydrodipicolinate reductase (269 aa).

Residues 10–15 (GANGRM), Glu-36, 99–101 (GTT), and 123–126 (AANF) contribute to the NAD(+) site. His-156 functions as the Proton donor/acceptor in the catalytic mechanism. Position 157 (His-157) interacts with (S)-2,3,4,5-tetrahydrodipicolinate. Catalysis depends on Lys-160, which acts as the Proton donor. 166-167 (GT) is a binding site for (S)-2,3,4,5-tetrahydrodipicolinate.

This sequence belongs to the DapB family.

The protein localises to the cytoplasm. The catalysed reaction is (S)-2,3,4,5-tetrahydrodipicolinate + NAD(+) + H2O = (2S,4S)-4-hydroxy-2,3,4,5-tetrahydrodipicolinate + NADH + H(+). The enzyme catalyses (S)-2,3,4,5-tetrahydrodipicolinate + NADP(+) + H2O = (2S,4S)-4-hydroxy-2,3,4,5-tetrahydrodipicolinate + NADPH + H(+). The protein operates within amino-acid biosynthesis; L-lysine biosynthesis via DAP pathway; (S)-tetrahydrodipicolinate from L-aspartate: step 4/4. In terms of biological role, catalyzes the conversion of 4-hydroxy-tetrahydrodipicolinate (HTPA) to tetrahydrodipicolinate. The sequence is that of 4-hydroxy-tetrahydrodipicolinate reductase from Neisseria meningitidis serogroup B (strain ATCC BAA-335 / MC58).